The following is an 83-amino-acid chain: Apolipoprotein C-I, basic form (83 aa).

An N-terminal signal peptide occupies residues 1-26 (MRLFLSLPVLVVVLSMVLEGPAPVQG).

This sequence belongs to the apolipoprotein C1 family.

The protein resides in the secreted. Its function is as follows. Inhibitor of lipoprotein binding to the low density lipoprotein (LDL) receptor, LDL receptor-related protein, and very low density lipoprotein (VLDL) receptor. Associates with high density lipoproteins (HDL) and the triacylglycerol-rich lipoproteins in the plasma and makes up about 10% of the protein of the VLDL and 2% of that of HDL. Appears to interfere directly with fatty acid uptake and is also the major plasma inhibitor of cholesteryl ester transfer protein (CETP). Binds free fatty acids and reduces their intracellular esterification. Modulates the interaction of APOE with beta-migrating VLDL and inhibits binding of beta-VLDL to the LDL receptor-related protein. This is Apolipoprotein C-I, basic form (APOC1) from Papio anubis (Olive baboon).